The sequence spans 135 residues: Integration host factor subunit beta (135 aa).

Over residues 83-92 (GKELRERVDR) the composition is skewed to basic and acidic residues. The disordered stretch occupies residues 83–135 (GKELRERVDRTVTQGGGMNGNGHAPHGKTGQSQLGSQSPASLHDDGQLNLVRS). Residues 111–122 (TGQSQLGSQSPA) show a composition bias toward polar residues.

The protein belongs to the bacterial histone-like protein family. In terms of assembly, heterodimer of an alpha and a beta chain.

In terms of biological role, this protein is one of the two subunits of integration host factor, a specific DNA-binding protein that functions in genetic recombination as well as in transcriptional and translational control. The polypeptide is Integration host factor subunit beta (Cupriavidus metallidurans (strain ATCC 43123 / DSM 2839 / NBRC 102507 / CH34) (Ralstonia metallidurans)).